Here is a 194-residue protein sequence, read N- to C-terminus: 7-methyl-GTP pyrophosphatase (194 aa).

The Proton acceptor role is filled by Asp-67.

It belongs to the Maf family. YceF subfamily. It depends on a divalent metal cation as a cofactor.

The protein localises to the cytoplasm. The enzyme catalyses N(7)-methyl-GTP + H2O = N(7)-methyl-GMP + diphosphate + H(+). Its function is as follows. Nucleoside triphosphate pyrophosphatase that hydrolyzes 7-methyl-GTP (m(7)GTP). May have a dual role in cell division arrest and in preventing the incorporation of modified nucleotides into cellular nucleic acids. The polypeptide is 7-methyl-GTP pyrophosphatase (Pseudoalteromonas atlantica (strain T6c / ATCC BAA-1087)).